The sequence spans 661 residues: 1-deoxy-D-xylulose-5-phosphate synthase (661 aa).

Thiamine diphosphate is bound by residues H98 and 139-141; that span reads AHS. Residue D170 participates in Mg(2+) binding. Thiamine diphosphate is bound by residues 171–172, N199, Y309, and E391; that span reads GA. N199 is a binding site for Mg(2+).

The protein belongs to the transketolase family. DXPS subfamily. Homodimer. Mg(2+) serves as cofactor. The cofactor is thiamine diphosphate.

The catalysed reaction is D-glyceraldehyde 3-phosphate + pyruvate + H(+) = 1-deoxy-D-xylulose 5-phosphate + CO2. It functions in the pathway metabolic intermediate biosynthesis; 1-deoxy-D-xylulose 5-phosphate biosynthesis; 1-deoxy-D-xylulose 5-phosphate from D-glyceraldehyde 3-phosphate and pyruvate: step 1/1. Catalyzes the acyloin condensation reaction between C atoms 2 and 3 of pyruvate and glyceraldehyde 3-phosphate to yield 1-deoxy-D-xylulose-5-phosphate (DXP). The chain is 1-deoxy-D-xylulose-5-phosphate synthase from Bradyrhizobium diazoefficiens (strain JCM 10833 / BCRC 13528 / IAM 13628 / NBRC 14792 / USDA 110).